The sequence spans 841 residues: Probable outer membrane usher protein EcpC (841 aa).

Positions 1-29 (MPLRRFSPGLKAQFAFGMVFLFVQPDASA) are cleaved as a signal peptide.

Belongs to the EcpC/MatD family.

In terms of biological role, part of the ecpRABCDE operon, which encodes the E.coli common pilus (ECP). ECP is found in both commensal and pathogenic strains and plays a dual role in early-stage biofilm development and host cell recognition. This is Probable outer membrane usher protein EcpC (ecpC) from Escherichia coli O157:H7.